The following is a 179-amino-acid chain: Alkyl hydroperoxide reductase AhpD (179 aa).

Catalysis depends on cysteine 130, which acts as the Proton donor. A disulfide bridge connects residues cysteine 130 and cysteine 133. Residue cysteine 133 is the Cysteine sulfenic acid (-SOH) intermediate of the active site.

This sequence belongs to the AhpD family. In terms of assembly, homotrimer.

It carries out the reaction N(6)-[(R)-dihydrolipoyl]-L-lysyl-[lipoyl-carrier protein] + a hydroperoxide = N(6)-[(R)-lipoyl]-L-lysyl-[lipoyl-carrier protein] + an alcohol + H2O. Functionally, antioxidant protein with alkyl hydroperoxidase activity. Required for the reduction of the AhpC active site cysteine residues and for the regeneration of the AhpC enzyme activity. This chain is Alkyl hydroperoxide reductase AhpD, found in Nocardia farcinica (strain IFM 10152).